The chain runs to 489 residues: Beta-glucosidase 14 (489 aa).

Positions 1–21 (MTSKYFSVLVFIILASNEVVA) are cleaved as a signal peptide. Residue Q49 participates in a beta-D-glucoside binding. Residue N80 is glycosylated (N-linked (GlcNAc...) asparagine). A beta-D-glucoside-binding positions include H153 and 198–199 (NE). Residue E199 is the Proton donor of the active site. A disulfide bridge links C218 with C226. The N-linked (GlcNAc...) asparagine glycan is linked to N225. Y343 contributes to the a beta-D-glucoside binding site. The N-linked (GlcNAc...) asparagine glycan is linked to N357. A beta-D-glucoside-binding positions include E396, W441, 448-449 (EW), and F457. E396 (nucleophile) is an active-site residue.

The protein belongs to the glycosyl hydrolase 1 family.

The enzyme catalyses Hydrolysis of terminal, non-reducing beta-D-glucosyl residues with release of beta-D-glucose.. This chain is Beta-glucosidase 14, found in Arabidopsis thaliana (Mouse-ear cress).